Here is an 874-residue protein sequence, read N- to C-terminus: Rho GTPase-activating protein 42 (874 aa).

Residues 7-262 (EFSDSYLDSP…MKSANQDYRP (256 aa)) enclose the BAR domain. Residues 225–261 (KQQLQFNLQNTRNNFESTRQEVERLMQRMKSANQDYR) adopt a coiled-coil conformation. Positions 265-374 (QWTMEGYLYV…WLEAMDGKEP (110 aa)) constitute a PH domain. Tyrosine 376 carries the post-translational modification Phosphotyrosine. The 197-residue stretch at 376-572 (YTLPAIISKK…ILIEHYEKIF (197 aa)) folds into the Rho-GAP domain. Residues 575–720 (APDPSIPLPQ…GDVSPPIDLV (146 aa)) form a disordered region. Low complexity predominate over residues 620-650 (DSYSSSPDSTPMGSIESLSSHSSEQNSTTKS). A compositionally biased stretch (polar residues) spans 667–686 (TPSSSNGQKSLGLWTTSPES). Phosphoserine is present on serine 683. Over residues 687 to 697 (SSREDATKTDA) the composition is skewed to basic and acidic residues. Residues 700–711 (DCQSVASVTSPG) are compositionally biased toward polar residues. A phosphoserine mark is found at serine 740, serine 753, serine 756, and serine 811. Residues 749–762 (SYSGSIQSLTSVGS) show a composition bias toward polar residues. The segment at 749–777 (SYSGSIQSLTSVGSKETPKASPNPDLPPK) is disordered. One can recognise an SH3 domain in the interval 816–874 (SSGRQAKAMYSCKAEHSHELSFPQGAIFSNVYPSVEPGWLKATYEGKTGLVPENYVVFL). Tyrosine 870 is modified (phosphotyrosine).

Highly and selectively expressed in smooth muscle cells.

Functionally, may influence blood pressure by functioning as a GTPase-activating protein for RHOA in vascular smooth muscle. This is Rho GTPase-activating protein 42 from Homo sapiens (Human).